We begin with the raw amino-acid sequence, 333 residues long: Ornithine carbamoyltransferase (333 aa).

Carbamoyl phosphate-binding positions include 56–59, glutamine 83, arginine 107, and 134–137; these read STRT and HPTQ. L-ornithine contacts are provided by residues asparagine 167, aspartate 231, and 235–236; that span reads SM. Residues 273-274 and arginine 318 contribute to the carbamoyl phosphate site; that span reads CL.

The protein belongs to the aspartate/ornithine carbamoyltransferase superfamily. OTCase family.

The protein localises to the cytoplasm. It catalyses the reaction carbamoyl phosphate + L-ornithine = L-citrulline + phosphate + H(+). It participates in amino-acid biosynthesis; L-arginine biosynthesis; L-arginine from L-ornithine and carbamoyl phosphate: step 1/3. In terms of biological role, reversibly catalyzes the transfer of the carbamoyl group from carbamoyl phosphate (CP) to the N(epsilon) atom of ornithine (ORN) to produce L-citrulline. This is Ornithine carbamoyltransferase from Staphylococcus aureus (strain MSSA476).